Here is a 775-residue protein sequence, read N- to C-terminus: MKSCRTLIFVAIILNGLSTFVAHAGAESKVHIVYLGEKQHDDPEFVTESHHRMLWSLLGSKEDAHSSMVHSYRHGFSGFAAKLTKSQAKKLADLPEVVHVTPDSFYQLDTTRTWDYLGLSVANPKNLLNDTNMGEEVIIGIVDSGVWPESEVFNDNGIGPVPSHWKGGCVSGENFTSSQCNKKLIGAKYFINGFLATHESFNSTESLDFISPRDRSGHGTHVATIAGGSYVPSISYKGLAGGTVRGGAPRARIAMYKACWYLDRFDINTCSSADILKAMDEAMHDGVDVLSLSIGYRFPYFPETDVRAVIATGAFHAVLKGITVVCSGGNSGPAAQTVGNTAPWILTVAATTLDRSFPTPITLGNNKLILGQAMYTGPELGFTSLVYPENPGNSNESFSGDCELLFFNSNHTMAGKVVLCFTTSTRYITVSSAVSYVKEAGGLGVIVARNPGDNLSPCEDDFPCVAVDYELGTDILLYIRSTGLPVVKIQPSKTLVGQPVGTKVADFSSRGPNSIEPAILKPDIAAPGVSILAATTTNKTFNDRGFIFLSGTSMAAPTISGVVALLKALHRDWSPAAIRSAIVTTAWRTDPFGEQIFAEGSPRKLADPFDYGGGLVNPEKAAKPGLVYDLGLEDYVLYMCSVGYNETSISQLVGKGTVCSNPKPSVLDFNLPSITIPNLKDEVTLTRTLTNVGQLESVYKVVIEPPIGIQVTVTPETLLFNSTTKRVSFKVKVSTTHKINTGYFFGSLTWSDSLHNVTIPLSVRTQILQNYYDEN.

The signal sequence occupies residues 1–26; that stretch reads MKSCRTLIFVAIILNGLSTFVAHAGA. A propeptide spans 27–109 (activation peptide); it reads ESKVHIVYLG…VTPDSFYQLD (83 aa). One can recognise an Inhibitor I9 domain in the interval 30 to 108; the sequence is VHIVYLGEKQ…HVTPDSFYQL (79 aa). The Peptidase S8 domain maps to 113-622; that stretch reads TWDYLGLSVA…GGLVNPEKAA (510 aa). Residue Asn-129 is glycosylated (N-linked (GlcNAc...) asparagine). Asp-143 serves as the catalytic Charge relay system. 2 N-linked (GlcNAc...) asparagine glycosylation sites follow: Asn-174 and Asn-202. His-218 acts as the Charge relay system in catalysis. The PA domain maps to 384-476; it reads SLVYPENPGN…VDYELGTDIL (93 aa). N-linked (GlcNAc...) asparagine glycans are attached at residues Asn-395, Asn-410, and Asn-538. The Charge relay system role is filled by Ser-553. N-linked (GlcNAc...) asparagine glycans are attached at residues Asn-645, Asn-721, and Asn-756.

This sequence belongs to the peptidase S8 family.

It is found in the secreted. In Arabidopsis thaliana (Mouse-ear cress), this protein is Subtilisin-like protease SBT3.8.